Here is a 188-residue protein sequence, read N- to C-terminus: Acireductone dioxygenase (188 aa).

Positions 1–20 are disordered; it reads MSRLRIFADSNPTTPHFDSR. The Fe(2+) site is built by histidine 97, histidine 99, glutamate 103, and histidine 141. The Ni(2+) site is built by histidine 97, histidine 99, glutamate 103, and histidine 141.

The protein belongs to the acireductone dioxygenase (ARD) family. As to quaternary structure, monomer. Requires Fe(2+) as cofactor. Ni(2+) serves as cofactor.

It carries out the reaction 1,2-dihydroxy-5-(methylsulfanyl)pent-1-en-3-one + O2 = 3-(methylsulfanyl)propanoate + CO + formate + 2 H(+). It catalyses the reaction 1,2-dihydroxy-5-(methylsulfanyl)pent-1-en-3-one + O2 = 4-methylsulfanyl-2-oxobutanoate + formate + 2 H(+). Its pathway is amino-acid biosynthesis; L-methionine biosynthesis via salvage pathway; L-methionine from S-methyl-5-thio-alpha-D-ribose 1-phosphate: step 5/6. Its function is as follows. Catalyzes 2 different reactions between oxygen and the acireductone 1,2-dihydroxy-3-keto-5-methylthiopentene (DHK-MTPene) depending upon the metal bound in the active site. Fe-containing acireductone dioxygenase (Fe-ARD) produces formate and 2-keto-4-methylthiobutyrate (KMTB), the alpha-ketoacid precursor of methionine in the methionine recycle pathway. Ni-containing acireductone dioxygenase (Ni-ARD) produces methylthiopropionate, carbon monoxide and formate, and does not lie on the methionine recycle pathway. The protein is Acireductone dioxygenase of Xanthomonas campestris pv. campestris (strain 8004).